Reading from the N-terminus, the 628-residue chain is MALSFSRDRTRPLPFAAEIGALGVVFGDIGTSPLYALKQGVLAVGGTNFLGGDVLGLLSLITWSIILSVTVKYVMLVLRADNDGEGGILALVTLLDLHRSALGMRWYLLAAGLLGAAMLIGDGVLTPAMSVLSAIEGLQVISPELEHWVVTLTVLVLLAVFLSQRLGTERIASFFGPIMLMWFGSLGALGVYGILQAPQVLAGLDPRYGIMLMVNHPGLAGVILGACFLAVTGGEALYADLGHFGRPVIARAWLFVAMPALLLNYFGQGAILLVDPNAVRNPFYDLCPDVFDIPLLFLATAATVIASQSIITGVFSLAKQAIELGYLPPMRIRYTSEHNEQHIYVGRLNWLLMIACIAVVLGFEASDRLASAYGIAVAFAMVTTSILFIAQVHRSWGWPAPAVWAMATGLLTIDFAFASANMTKIHDGGWLPLSIAAAIIFVMVSWRRGLEGVVAQQVRFTEPLDSFVARKDRVNDVEAPRTAIFLSRAGAMTPVALSRMADLLKVRFEKAVIVSVWIAARPRVSVEDRVKVTTLNEGFVRVDLRFGYMQQIDVPSVLGPALSARGIDPDAAIYVIGHERIIPPDEVTKIKDVVAHVFAFLARNAERSVDRFGLPRARTVEIGYPVKL.

The next 12 helical transmembrane spans lie at 15–35 (FAAE…SPLY), 49–69 (FLGG…ILSV), 106–126 (WYLL…GVLT), 141–161 (ISPE…LAVF), 174–194 (FFGP…VYGI), 210–230 (IMLM…CFLA), 254–274 (LFVA…ILLV), 295–315 (LLFL…TGVF), 343–363 (IYVG…VLGF), 369–389 (LASA…ILFI), 398–418 (WPAP…FAFA), and 425–445 (IHDG…VMVS).

The protein belongs to the HAK/KUP transporter (TC 2.A.72) family.

The protein localises to the cell inner membrane. The catalysed reaction is K(+)(in) + H(+)(in) = K(+)(out) + H(+)(out). In terms of biological role, transport of potassium into the cell. Likely operates as a K(+):H(+) symporter. The sequence is that of Probable potassium transport system protein Kup from Xanthobacter autotrophicus (strain ATCC BAA-1158 / Py2).